We begin with the raw amino-acid sequence, 693 residues long: Testis-specific Y-encoded-like protein 2 (693 aa).

2 disordered regions span residues 1–56 (MDRP…EAAQ) and 104–125 (GYGEAPPPTESLEALPTPEASG). A Glycyl lysine isopeptide (Lys-Gly) (interchain with G-Cter in SUMO2) cross-link involves residue K11. Residues S18 and S20 each carry the phosphoserine modification. Residues 23-44 (RDPPPPPPPPPLLRLPLPPPQQ) show a composition bias toward pro residues. Glycyl lysine isopeptide (Lys-Gly) (interchain with G-Cter in SUMO2) cross-links involve residues K163 and K165. Positions 175-207 (EDEDERESMRSSRRRRRRRRRKQRKVKRESRER) are disordered. Residues 185–202 (SSRRRRRRRRRKQRKVKR) are compositionally biased toward basic residues. At T340 the chain carries Phosphothreonine. 2 disordered regions span residues 474 to 605 (ENIC…DIEY) and 627 to 693 (ISDE…GKTG). Residues 487–496 (VPNNETTDNN) show a composition bias toward polar residues. Over residues 509 to 519 (ESADDNNENPE) the composition is skewed to acidic residues. Positions 531–542 (NPNNNENTYGNN) are enriched in low complexity. Composition is skewed to acidic residues over residues 559 to 602 (SDSD…DDRD) and 627 to 675 (ISDE…DLED). Residues S658, S668, and S671 each carry the phosphoserine modification.

The protein belongs to the nucleosome assembly protein (NAP) family. In terms of assembly, interacts with histones. Interacts with CASK. Part of a complex containing CASK, TBR1 and TSPYL2. In terms of processing, phosphorylation at Ser-20 and/or Thr-340 impairs function on cell proliferation. In terms of tissue distribution, ubiquitously expressed, with highest levels in brain, testis and heart, and lowest levels in liver and pancreas.

The protein localises to the nucleus. It localises to the cytoplasm. In terms of biological role, part of the CASK/TBR1/TSPYL2 transcriptional complex which modulates gene expression in response to neuronal synaptic activity, probably by facilitating nucleosome assembly. May inhibit cell proliferation by inducing p53-dependent CDKN1A expression. In Homo sapiens (Human), this protein is Testis-specific Y-encoded-like protein 2 (TSPYL2).